Here is a 308-residue protein sequence, read N- to C-terminus: uncharacterized protein (308 aa).

A helical membrane pass occupies residues 191–211; the sequence is YLCLNLPYIIVALTLVPYSLV.

Its subcellular location is the host membrane. This is an uncharacterized protein from Saccharolobus islandicus (Sulfolobus islandicus).